Consider the following 126-residue polypeptide: Large ribosomal subunit protein bL12 (126 aa).

This sequence belongs to the bacterial ribosomal protein bL12 family. Homodimer. Part of the ribosomal stalk of the 50S ribosomal subunit. Forms a multimeric L10(L12)X complex, where L10 forms an elongated spine to which 2 to 4 L12 dimers bind in a sequential fashion. Binds GTP-bound translation factors.

Its function is as follows. Forms part of the ribosomal stalk which helps the ribosome interact with GTP-bound translation factors. Is thus essential for accurate translation. The chain is Large ribosomal subunit protein bL12 from Methylocella silvestris (strain DSM 15510 / CIP 108128 / LMG 27833 / NCIMB 13906 / BL2).